Consider the following 95-residue polypeptide: Parvalbumin alpha (95 aa).

At Ser19 the chain carries Phosphoserine. 2 consecutive EF-hand domains span residues 34-69 (KNRE…FSAD) and 73-95 (LSDT…KIGA). The Ca(2+) site is built by Asp47, Asp49, Ser51, Phe53, Glu55, Glu58, Asp86, Asp88, Asp90, and Lys92.

The protein belongs to the parvalbumin family.

Its function is as follows. In muscle, parvalbumin is thought to be involved in relaxation after contraction. It binds two calcium ions. In Cavia porcellus (Guinea pig), this protein is Parvalbumin alpha (PVALB).